The following is a 212-amino-acid chain: MERLLVLVRHGQSEWNLRNLFTGWRDPDLTERGVAEARAAGRGLKRDGYGFDVAFTSALIRAQRTCALVLEEMGLSEIPILRERALNERDYGDLSGLNKDEARARWGDAQVHAWRRGYDVRPPGGESLKDTAARVLPCYVATILPRVMAGQRVLVAAHGNSLRALVMVLDGLTEAQVPDLQIRTGVPLVYRLNADTTVASKTVLDQDVDAGR.

Substrate is bound by residues 9-16, 22-23, arginine 61, 88-91, lysine 99, 115-116, and 159-160; these read RHGQSEWN, TG, ERDY, RR, and GN. The active-site Tele-phosphohistidine intermediate is histidine 10. Glutamate 88 (proton donor/acceptor) is an active-site residue.

The protein belongs to the phosphoglycerate mutase family. BPG-dependent PGAM subfamily. As to quaternary structure, homodimer.

The enzyme catalyses (2R)-2-phosphoglycerate = (2R)-3-phosphoglycerate. The protein operates within carbohydrate degradation; glycolysis; pyruvate from D-glyceraldehyde 3-phosphate: step 3/5. Its function is as follows. Catalyzes the interconversion of 2-phosphoglycerate and 3-phosphoglycerate. The sequence is that of 2,3-bisphosphoglycerate-dependent phosphoglycerate mutase from Methylobacterium radiotolerans (strain ATCC 27329 / DSM 1819 / JCM 2831 / NBRC 15690 / NCIMB 10815 / 0-1).